Reading from the N-terminus, the 472-residue chain is FAD-dependent monooxygenase ltmM (472 aa).

A helical transmembrane segment spans residues valine 7–glycine 27. Glutamate 34, glycine 48, and arginine 107 together coordinate FAD. A glycan (N-linked (GlcNAc...) asparagine) is linked at asparagine 186. FAD is bound by residues aspartate 306 and alanine 319. Residues isoleucine 450–leucine 470 traverse the membrane as a helical segment.

It belongs to the paxM FAD-dependent monooxygenase family. It depends on FAD as a cofactor.

Its subcellular location is the membrane. The protein operates within secondary metabolite biosynthesis. Its function is as follows. FAD-dependent monooxygenase; part of the gene cluster that mediates the biosynthesis of lolitrems, indole-diterpene mycotoxins that are potent tremorgens in mammals, and are synthesized by clavicipitaceous fungal endophytes in association with their grass hosts. The geranylgeranyl diphosphate (GGPP) synthase ltmG is proposed to catalyze the first step in lolitremB biosynthesis. LtmG catalyzes a series of iterative condensations of isopentenyl diphosphate (IPP) with dimethylallyl diphosphate (DMAPP), geranyl diphosphate (GPP), and farnesyl diphosphate (FPP), to form GGPP. GGPP then condenses with indole-3-glycerol phosphate to form 3-geranylgeranylindole, an acyclic intermediate, to be incorporated into paxilline. Either ltmG or ltmC could be responsible for this step, as both are putative prenyl transferases. The FAD-dependent monooxygenase ltmM then catalyzes the epoxidation of the two terminal alkenes of the geranylgeranyl moiety, which is subsequently cyclized by ltmB, to paspaline. The cytochrome P450 monooxygenases ltmQ and ltmP can sequentially oxidize paspaline to terpendole E and terpendole F. Alternatively, ltmP converts paspaline to an intermediate which is oxidized by ltmQ to terpendole F. LtmF, ltmK, ltmE and ltmJ appear to be unique to the epichloe endophytes. The prenyltransferase ltmF is involved in the 27-hydroxyl-O-prenylation. The cytochrome P450 monooxygenase ltmK is required for the oxidative acetal ring formation. The multi-functional prenyltransferase ltmE is required for C20- and C21-prenylations of the indole ring of paspalanes and acts together with the cytochrome P450 monooxygenase ltmJ to yield lolitremanes by multiple oxidations and ring closures. The stereoisomer pairs of lolitriol and lolitrem N or lolitrem B and lolitrem F may be attributed to variations in the way in which ring closure can occur under the action of ltmJ. While the major product of this pathway is lolitrem B, the prenyl transferases and cytochrome P450 monooxygenases identified in this pathway have a remarkable versatility in their regio- and stereo-specificities to generate a diverse range of metabolites that are products of a metabolic grid rather than a linear pathway. This Epichloe festucae var. lolii (Neotyphodium lolii) protein is FAD-dependent monooxygenase ltmM (ltmM).